A 345-amino-acid polypeptide reads, in one-letter code: Anthranilate phosphoribosyltransferase (345 aa).

5-phospho-alpha-D-ribose 1-diphosphate contacts are provided by residues G88, 91–92 (GD), T96, 98–101 (NIST), 116–124 (KHGNRSASG), and S128. An anthranilate-binding site is contributed by G88. Position 100 (S100) interacts with Mg(2+). N119 is a binding site for anthranilate. An anthranilate-binding site is contributed by R174. D233 and E234 together coordinate Mg(2+).

Belongs to the anthranilate phosphoribosyltransferase family. As to quaternary structure, homodimer. The cofactor is Mg(2+).

The enzyme catalyses N-(5-phospho-beta-D-ribosyl)anthranilate + diphosphate = 5-phospho-alpha-D-ribose 1-diphosphate + anthranilate. Its pathway is amino-acid biosynthesis; L-tryptophan biosynthesis; L-tryptophan from chorismate: step 2/5. Its function is as follows. Catalyzes the transfer of the phosphoribosyl group of 5-phosphorylribose-1-pyrophosphate (PRPP) to anthranilate to yield N-(5'-phosphoribosyl)-anthranilate (PRA). This Prochlorococcus marinus (strain NATL1A) protein is Anthranilate phosphoribosyltransferase.